Consider the following 657-residue polypeptide: MSFLKFAYRNSWRYYSKSTRHFHKIPIRQFIIPTSIAFYLTQNSFPKQNCLIYNDSLKPDPKGDTFEMGLYVSSENELQEKLKSFRSAKITESRNKLIRYLRIFWFGFNDNIVEPVCTILRFLEISAIFLPLLLLYPISWFGHKLKITDTNITETRGSLIWCQLLRKALELAGPSFIKLGQWAGSRTDIFSHALCHELGKLHSNVTAHSLSFTLEKLSQALKVDKIEDAFDEFNRTPIGVGSIAQVYVGELSQKYIDKYDNIQIGKDGNRWCAIKILHPNVRSQIRRDLKIMKFCADAINWIPTMEWLSLPSEVDQFSILMNIQLDLRIEALNLERFNENFKNSIQVKFPKPFLPLSNRDVMFEEHVYGLSMEKFLSTKKQINDVELCKKVSDPFVDAFLQMLILDDFVHADLHPGNVIIRFVKTNKYGTNIISSELESYRITHDLRKKIEEDQDQDFVGKLKSVLTNYTPQICFIDTGIITELNEKNRINFIALFNALARFDGYRAGELMIERSRTPETAIDKEVFAFKVEKLVDKVKQRTFTLGTVSIGDLLDQMLSMVRSHHVRMESDFVSVVVAILLLEGIGRQLDPNLDLFESSLPILREFGFKREAKSLLKDASTLSMLKIWVGLEVRQLMHLSMKQIYDLVRTDQLCPNY.

Residues 1 to 15 (MSFLKFAYRNSWRYY) constitute a mitochondrion transit peptide.

It belongs to the protein kinase superfamily. ADCK protein kinase family.

The protein resides in the mitochondrion. The protein is ABC1 family protein YPL109C, mitochondrial of Saccharomyces cerevisiae (strain ATCC 204508 / S288c) (Baker's yeast).